The following is a 355-amino-acid chain: Nuclear speckle splicing regulatory protein 1 homolog (355 aa).

Positions Met-1 to Ser-57 are disordered. The span at Asn-44–Ser-54 shows a compositional bias: polar residues. Positions Met-99 to Ser-162 form a coiled coil. Disordered regions lie at residues Ser-253 to Tyr-292 and Lys-325 to Pro-355. The span at Tyr-280–His-289 shows a compositional bias: basic and acidic residues. Residues Ser-293–Ile-326 are a coiled coil. The span at Ser-329 to Ser-339 shows a compositional bias: polar residues. The span at Gln-346–Pro-355 shows a compositional bias: basic residues.

It belongs to the NSRP1 family.

This Schizosaccharomyces pombe (strain 972 / ATCC 24843) (Fission yeast) protein is Nuclear speckle splicing regulatory protein 1 homolog.